The sequence spans 665 residues: RNA polymerase II-associated protein 3 (665 aa).

Position 2 is an N-acetylthreonine (threonine 2). One copy of the TPR 1 repeat lies at 8 to 41 (IELQLQVKQNAEELQDFMRDLENWEKDIKQKDME). Positions 37-82 (QKDMELRRQNGVPEENLPPIRNGNFRKKKKGKAKESSKKTREENTK) are disordered. The segment covering 69-82 (AKESSKKTREENTK) has biased composition (basic and acidic residues). A phosphoserine mark is found at serine 87, serine 116, serine 119, and serine 121. Residues 109–129 (DSTHESLSQESESEEDGIHVD) are disordered. TPR repeat units lie at residues 133 to 166 (ALVL…DPYN), 168 to 200 (VLPT…NRSY), 201 to 234 (TKAY…EPNN), 282 to 315 (AISE…DGAN), 317 to 349 (LLPA…DGSY), and 350 to 383 (SKAF…EPGN). At serine 481 the chain carries Phosphoserine. Residue lysine 498 forms a Glycyl lysine isopeptide (Lys-Gly) (interchain with G-Cter in SUMO2) linkage.

This sequence belongs to the RPAP3 family. In terms of assembly, tightly associated with the RNA polymerase II complex. Component of the R2TP complex composed at least of RUVBL1, RUVBL2, RPAP3 and PIHD1. Component of the PAQosome complex which is responsible for the biogenesis of several protein complexes and which consists of R2TP complex members RUVBL1, RUVBL2, RPAP3 and PIH1D1, URI complex members PFDN2, PFDN6, PDRG1, UXT and URI1 as well as ASDURF, POLR2E and DNAAF10/WDR92. Interacts with PIH1D1. Interacts with TSC1 and TSC2. Interacts with PRPF8 and EFTUD2 in a ZNHIT2-dependent manner.

In terms of biological role, forms an interface between the RNA polymerase II enzyme and chaperone/scaffolding protein, suggesting that it is required to connect RNA polymerase II to regulators of protein complex formation. The protein is RNA polymerase II-associated protein 3 (RPAP3) of Homo sapiens (Human).